The chain runs to 810 residues: Hemoglobin-haptoglobin utilization protein B (810 aa).

The first 22 residues, 1-22, serve as a signal peptide directing secretion; that stretch reads MPIPFKPVLAAAAIAQAFPAFA. Positions 34–166 constitute a TBDR plug domain; that stretch reads NEITVTGTHK…LGGAVNYQTK (133 aa). A TBDR beta-barrel domain is found at 175-810; sequence DKPYHLGIKG…SYNFTIEAKF (636 aa). The TonB C-terminal box motif lies at 793–810; sequence QRFTSPGRSYNFTIEAKF.

This sequence belongs to the TonB-dependent receptor family.

Its subcellular location is the cell outer membrane. Acts as a receptor for hemoglobin or the hemoglobin/haptoglobin complex and is required for heme uptake. The protein is Hemoglobin-haptoglobin utilization protein B (hpuB) of Neisseria meningitidis serogroup A / serotype 4A (strain DSM 15465 / Z2491).